A 96-amino-acid polypeptide reads, in one-letter code: Large ribosomal subunit protein bL27 (96 aa).

A propeptide spanning residues 1-9 (MLRLDLQFF) is cleaved from the precursor. Positions 13–35 (KGVGSTKNGRDSQSKRLGAKRAD) are disordered.

Belongs to the bacterial ribosomal protein bL27 family. The N-terminus is cleaved by ribosomal processing cysteine protease Prp.

The sequence is that of Large ribosomal subunit protein bL27 from Bacillus cereus (strain B4264).